The primary structure comprises 164 residues: Ribosome maturation factor RimM (164 aa).

One can recognise a PRC barrel domain in the interval Lys90–Trp161.

Belongs to the RimM family. Binds ribosomal protein uS19.

The protein resides in the cytoplasm. Functionally, an accessory protein needed during the final step in the assembly of 30S ribosomal subunit, possibly for assembly of the head region. Essential for efficient processing of 16S rRNA. May be needed both before and after RbfA during the maturation of 16S rRNA. It has affinity for free ribosomal 30S subunits but not for 70S ribosomes. This is Ribosome maturation factor RimM from Clostridium botulinum (strain Hall / ATCC 3502 / NCTC 13319 / Type A).